Consider the following 72-residue polypeptide: Movement protein TGBp3 (72 aa).

At 1–2 the chain is on the lumenal side; that stretch reads MS. A helical membrane pass occupies residues 3–23; that stretch reads LSFSLIVFAVGVAVSIGVLTL. Over 24–72 the chain is Cytoplasmic; that stretch reads TTQQSSSYCLILVDGAKAVVEGCHLRQDIPAILSELKPASSPFNPLFCS.

This sequence belongs to the Tymovirales TGBp3 protein family.

The protein localises to the host endoplasmic reticulum membrane. Plays a role in viral cell-to-cell propagation, by facilitating genome transport to neighboring plant cells through plasmosdesmata. May induce the formation of granular vesicles derived from the Endoplasmic reticulum, which align on actin filaments. The polypeptide is Movement protein TGBp3 (ORF4) (Lolium latent virus (isolate Lolium/USA/US1/-) (LoLV)).